The sequence spans 244 residues: Purine nucleoside phosphorylase HI_0175 (244 aa).

Residues His-70, Cys-105, and His-122 each contribute to the Zn(2+) site.

This sequence belongs to the purine nucleoside phosphorylase YfiH/LACC1 family. Homodimer. The cofactor is Cu(2+). It depends on Zn(2+) as a cofactor.

The enzyme catalyses adenosine + phosphate = alpha-D-ribose 1-phosphate + adenine. It carries out the reaction S-methyl-5'-thioadenosine + phosphate = 5-(methylsulfanyl)-alpha-D-ribose 1-phosphate + adenine. It catalyses the reaction inosine + phosphate = alpha-D-ribose 1-phosphate + hypoxanthine. The catalysed reaction is adenosine + H2O + H(+) = inosine + NH4(+). In terms of biological role, purine nucleoside enzyme that catalyzes the phosphorolysis of adenosine and inosine nucleosides, yielding D-ribose 1-phosphate and the respective free bases, adenine and hypoxanthine. Also catalyzes the phosphorolysis of S-methyl-5'-thioadenosine into adenine and S-methyl-5-thio-alpha-D-ribose 1-phosphate. Also has adenosine deaminase activity. This Haemophilus influenzae (strain ATCC 51907 / DSM 11121 / KW20 / Rd) protein is Purine nucleoside phosphorylase HI_0175.